Reading from the N-terminus, the 109-residue chain is Large ribosomal subunit protein uL22 (109 aa).

The protein belongs to the universal ribosomal protein uL22 family. In terms of assembly, part of the 50S ribosomal subunit.

Functionally, this protein binds specifically to 23S rRNA; its binding is stimulated by other ribosomal proteins, e.g. L4, L17, and L20. It is important during the early stages of 50S assembly. It makes multiple contacts with different domains of the 23S rRNA in the assembled 50S subunit and ribosome. In terms of biological role, the globular domain of the protein is located near the polypeptide exit tunnel on the outside of the subunit, while an extended beta-hairpin is found that lines the wall of the exit tunnel in the center of the 70S ribosome. The sequence is that of Large ribosomal subunit protein uL22 from Azoarcus sp. (strain BH72).